Reading from the N-terminus, the 837-residue chain is Striatin-interacting protein 1 (837 aa).

N-acetylmethionine is present on Met-1. A disordered region spans residues 1–67 (MEPAAGTPGP…DSEGYSESPD (67 aa)). Positions 18–35 (PQPPPPPPPATAQPPPGA) are enriched in pro residues. Residues 47 to 60 (KAREFNRNQRKDSE) show a composition bias toward basic and acidic residues. Phosphoserine occurs at positions 59, 335, and 339. Residues 336-423 (PPASASDLIE…DRLTCPKGLP (88 aa)) form a disordered region. The segment covering 356 to 377 (KALIKQDNLDAFNERDPYKADD) has biased composition (basic and acidic residues). The span at 378–391 (SREEEEENDDDNSL) shows a compositional bias: acidic residues. Ser-788 is modified (phosphoserine). Residues 796 to 837 (DNCLQSVLGQRVDLPEDFQMNYDLWLEREVFSKPISWEELLQ) are required for STRIPAK core complex formation.

It belongs to the STRIP family. As to quaternary structure, part of the core of STRIPAK complexes composed of PP2A catalytic and scaffolding subunits, the striatins (PP2A regulatory subunits), the striatin-associated proteins MOB4, STRIP1 and STRIP2, PDCD10 and members of the STE20 kinases, such as STK24 and STK26. The STRIPAK complex can be extended by adapter proteins such as SLMAP:SIKE1, CTTNBP2 or CTTNBP2NL. Interacts with CDC42BPB. Interacts with CTTNBP2NL.

It is found in the cytoplasm. Functionally, plays a role in the regulation of cell morphology and cytoskeletal organization. Required in the cortical actin filament dynamics and cell shape. Part of the striatin-interacting phosphatase and kinase (STRIPAK) complexes. STRIPAK complexes have critical roles in protein (de)phosphorylation and are regulators of multiple signaling pathways including Hippo, MAPK, nuclear receptor and cytoskeleton remodeling. Different types of STRIPAK complexes are involved in a variety of biological processes such as cell growth, differentiation, apoptosis, metabolism and immune regulation. This is Striatin-interacting protein 1 (STRIP1) from Bos taurus (Bovine).